Consider the following 461-residue polypeptide: Phosphoenolpyruvate carboxylase (461 aa).

This sequence belongs to the PEPCase type 2 family. Homotetramer. Mg(2+) serves as cofactor.

It catalyses the reaction oxaloacetate + phosphate = phosphoenolpyruvate + hydrogencarbonate. Its function is as follows. Catalyzes the irreversible beta-carboxylation of phosphoenolpyruvate (PEP) to form oxaloacetate (OAA), a four-carbon dicarboxylic acid source for the tricarboxylic acid cycle. The chain is Phosphoenolpyruvate carboxylase from Pyrobaculum islandicum (strain DSM 4184 / JCM 9189 / GEO3).